The following is a 372-amino-acid chain: Glutamate 5-kinase (372 aa).

Position 14 (lysine 14) interacts with ATP. Substrate-binding residues include serine 54, aspartate 141, and asparagine 153. Position 173 to 174 (173 to 174 (TD)) interacts with ATP. The PUA domain maps to 280-358 (RGTLVLDDGA…DAIVGLLGYM (79 aa)).

This sequence belongs to the glutamate 5-kinase family.

The protein resides in the cytoplasm. It catalyses the reaction L-glutamate + ATP = L-glutamyl 5-phosphate + ADP. Its pathway is amino-acid biosynthesis; L-proline biosynthesis; L-glutamate 5-semialdehyde from L-glutamate: step 1/2. Its function is as follows. Catalyzes the transfer of a phosphate group to glutamate to form L-glutamate 5-phosphate. The polypeptide is Glutamate 5-kinase (Pseudomonas fluorescens (strain Pf0-1)).